We begin with the raw amino-acid sequence, 383 residues long: Na(+)/H(+) antiporter NhaA (383 aa).

11 helical membrane passes run 10–30 (LIGG…NNSP), 56–76 (LMHW…GLEI), 91–111 (IITP…IYLS), 121–141 (GWAI…ALLG), 150–170 (LLVI…IAIF), 174–194 (SLSL…IICN), 206–226 (VVLG…ATLA), 254–274 (PWII…ISFS), 289–308 (IIWG…LAVF), 327–347 (GISL…VLAF), and 355–375 (AIKI…YIVL).

It belongs to the NhaA Na(+)/H(+) (TC 2.A.33) antiporter family.

It localises to the cell inner membrane. The catalysed reaction is Na(+)(in) + 2 H(+)(out) = Na(+)(out) + 2 H(+)(in). In terms of biological role, na(+)/H(+) antiporter that extrudes sodium in exchange for external protons. This is Na(+)/H(+) antiporter NhaA from Francisella tularensis subsp. tularensis (strain SCHU S4 / Schu 4).